The primary structure comprises 190 residues: TATA box-binding protein-like 1 (190 aa).

The protein belongs to the TBP family. As to quaternary structure, binds TFIIA and TFIIB.

Its subcellular location is the cytoplasm. It localises to the nucleus. Its function is as follows. Part of a specialized transcription system that mediates the transcription of most ribosomal proteins through the 5'-TCT-3' motif which is a core promoter element at these genes. Seems to also mediate the transcription of NF1. Does not bind the TATA box. The sequence is that of TATA box-binding protein-like 1 (TBPL1) from Pongo abelii (Sumatran orangutan).